The sequence spans 215 residues: Cytochrome b6 (215 aa).

Residues 32–52 (IFYCLGGITLTCFLVQIATGF) form a helical membrane-spanning segment. Position 35 (C35) interacts with heme c. Residues H86 and H100 each coordinate heme b. A run of 3 helical transmembrane segments spans residues 90 to 110 (ASMM…TGGF), 116 to 136 (LTWV…VTGY), and 186 to 206 (LHTF…FLMI). H187 and H202 together coordinate heme b.

It belongs to the cytochrome b family. PetB subfamily. In terms of assembly, the 4 large subunits of the cytochrome b6-f complex are cytochrome b6, subunit IV (17 kDa polypeptide, PetD), cytochrome f and the Rieske protein, while the 4 small subunits are PetG, PetL, PetM and PetN. The complex functions as a dimer. Heme b is required as a cofactor. It depends on heme c as a cofactor.

It is found in the plastid. The protein resides in the chloroplast thylakoid membrane. In terms of biological role, component of the cytochrome b6-f complex, which mediates electron transfer between photosystem II (PSII) and photosystem I (PSI), cyclic electron flow around PSI, and state transitions. The protein is Cytochrome b6 of Adiantum capillus-veneris (Maidenhair fern).